We begin with the raw amino-acid sequence, 142 residues long: Nucleoside diphosphate kinase (142 aa).

ATP-binding residues include Lys9, Phe57, Arg85, Thr91, Arg102, and Asn112. His115 (pros-phosphohistidine intermediate) is an active-site residue.

The protein belongs to the NDK family. As to quaternary structure, homotetramer. It depends on Mg(2+) as a cofactor.

Its subcellular location is the cytoplasm. The catalysed reaction is a 2'-deoxyribonucleoside 5'-diphosphate + ATP = a 2'-deoxyribonucleoside 5'-triphosphate + ADP. The enzyme catalyses a ribonucleoside 5'-diphosphate + ATP = a ribonucleoside 5'-triphosphate + ADP. In terms of biological role, major role in the synthesis of nucleoside triphosphates other than ATP. The ATP gamma phosphate is transferred to the NDP beta phosphate via a ping-pong mechanism, using a phosphorylated active-site intermediate. The protein is Nucleoside diphosphate kinase of Dehalococcoides mccartyi (strain CBDB1).